A 155-amino-acid chain; its full sequence is S-ribosylhomocysteine lyase (155 aa).

Positions 57, 61, and 124 each coordinate Fe cation.

It belongs to the LuxS family. Homodimer. It depends on Fe cation as a cofactor.

The catalysed reaction is S-(5-deoxy-D-ribos-5-yl)-L-homocysteine = (S)-4,5-dihydroxypentane-2,3-dione + L-homocysteine. In terms of biological role, involved in the synthesis of autoinducer 2 (AI-2) which is secreted by bacteria and is used to communicate both the cell density and the metabolic potential of the environment. The regulation of gene expression in response to changes in cell density is called quorum sensing. Catalyzes the transformation of S-ribosylhomocysteine (RHC) to homocysteine (HC) and 4,5-dihydroxy-2,3-pentadione (DPD). The sequence is that of S-ribosylhomocysteine lyase from Listeria monocytogenes serovar 1/2a (strain ATCC BAA-679 / EGD-e).